We begin with the raw amino-acid sequence, 704 residues long: Polyribonucleotide nucleotidyltransferase (704 aa).

The Mg(2+) site is built by Asp-485 and Asp-491. Residues 552 to 611 form the KH domain; that stretch reads PKTETIQIDPDKIRSVIGAGGKVINKIIQDTGVKIDIKEDGSVFVSSSDHAGVKEAIKII. The 69-residue stretch at 621–689 folds into the S1 motif domain; that stretch reads GEIYLGKVTK…SQGRINLSRK (69 aa).

Belongs to the polyribonucleotide nucleotidyltransferase family. Mg(2+) serves as cofactor.

The protein localises to the cytoplasm. It catalyses the reaction RNA(n+1) + phosphate = RNA(n) + a ribonucleoside 5'-diphosphate. In terms of biological role, involved in mRNA degradation. Catalyzes the phosphorolysis of single-stranded polyribonucleotides processively in the 3'- to 5'-direction. The chain is Polyribonucleotide nucleotidyltransferase from Clostridium botulinum (strain Eklund 17B / Type B).